Reading from the N-terminus, the 404-residue chain is Cysteine desulfurase IscS (404 aa).

Residues 75-76 (AT), asparagine 155, glutamine 183, and 203-205 (SAH) contribute to the pyridoxal 5'-phosphate site. An N6-(pyridoxal phosphate)lysine modification is found at lysine 206. Threonine 243 lines the pyridoxal 5'-phosphate pocket. Cysteine 328 (cysteine persulfide intermediate) is an active-site residue. Cysteine 328 serves as a coordination point for [2Fe-2S] cluster.

Belongs to the class-V pyridoxal-phosphate-dependent aminotransferase family. NifS/IscS subfamily. In terms of assembly, homodimer. Forms a heterotetramer with IscU, interacts with other sulfur acceptors. Pyridoxal 5'-phosphate serves as cofactor.

It is found in the cytoplasm. It carries out the reaction (sulfur carrier)-H + L-cysteine = (sulfur carrier)-SH + L-alanine. The protein operates within cofactor biosynthesis; iron-sulfur cluster biosynthesis. In terms of biological role, master enzyme that delivers sulfur to a number of partners involved in Fe-S cluster assembly, tRNA modification or cofactor biosynthesis. Catalyzes the removal of elemental sulfur atoms from cysteine to produce alanine. Functions as a sulfur delivery protein for Fe-S cluster synthesis onto IscU, an Fe-S scaffold assembly protein, as well as other S acceptor proteins. This Pseudomonas fluorescens (strain SBW25) protein is Cysteine desulfurase IscS.